The sequence spans 298 residues: Urease accessory protein UreD (298 aa).

Belongs to the UreD family. As to quaternary structure, ureD, UreF and UreG form a complex that acts as a GTP-hydrolysis-dependent molecular chaperone, activating the urease apoprotein by helping to assemble the nickel containing metallocenter of UreC. The UreE protein probably delivers the nickel.

It is found in the cytoplasm. In terms of biological role, required for maturation of urease via the functional incorporation of the urease nickel metallocenter. The protein is Urease accessory protein UreD of Frankia alni (strain DSM 45986 / CECT 9034 / ACN14a).